The sequence spans 217 residues: MTQDEMKKAAGWAALKYVVPGTIVGVGTGSTVNHFIDALATMKDQINGAVSSSIASTERLKEFGINVYDLNDIDALSVYVDGADEINASRDMIKGGGAALTREKIVAAVADKFICIIDNTKTVDVLGQFPLPVEVIPMAREYVAREIRKLGGNPEWREGVVTDNGNIILDVKGMAIKDAKALEVQLNGIVGVVTNGLFAHRGADVVLIGTPDGVITQ.

Residues 28-31, 81-84, and 94-97 each bind substrate; these read TGST, DGAD, and KGGG. E103 functions as the Proton acceptor in the catalytic mechanism. K121 lines the substrate pocket.

The protein belongs to the ribose 5-phosphate isomerase family. In terms of assembly, homodimer.

The enzyme catalyses aldehydo-D-ribose 5-phosphate = D-ribulose 5-phosphate. Its pathway is carbohydrate degradation; pentose phosphate pathway; D-ribose 5-phosphate from D-ribulose 5-phosphate (non-oxidative stage): step 1/1. Its function is as follows. Catalyzes the reversible conversion of ribose-5-phosphate to ribulose 5-phosphate. This is Ribose-5-phosphate isomerase A from Aeromonas salmonicida (strain A449).